The chain runs to 2772 residues: Protein DDB_G0276689 (2772 aa).

Disordered regions lie at residues 50–82 (QQLK…NNNN), 371–415 (NLET…NGKS), 475–514 (LDIN…KNNL), 612–650 (NKNN…NNNE), 685–708 (LRGS…DSSL), and 933–982 (LVNN…NNSN). Low complexity-rich tracts occupy residues 376–412 (NNNN…NNNN), 478–514 (NSKN…KNNL), 614–649 (NNNN…NNNN), and 688–708 (SFSP…DSSL). The LRR 1 repeat unit spans residues 1065-1089 (LSKWILNLDDNNYNHIPFMSLVLMP). The tract at residues 1282–1319 (NNNNIDNNNNNNNNNNNNNNNNNNNNNNNNNNNNNNNN) is disordered. LRR repeat units follow at residues 1393–1416 (LSNL…TPKN) and 1543–1567 (HKDV…SFSN). The span at 1587–1619 (QNNNYNNNNYNNNYNNNNNNNNNNNNNNNNNNN) shows a compositional bias: low complexity. Residues 1587–1622 (QNNNYNNNNYNNNYNNNNNNNNNNNNNNNNNNNIDN) are disordered. The LRR 4 repeat unit spans residues 1899–1922 (LEELTKQEIGYQVLLVLPTDLQVE). Polar residues-rich tracts occupy residues 1999 to 2011 (YVSN…NDQI) and 2073 to 2083 (LNIVHSTSPNS). Disordered regions lie at residues 1999–2021 (YVSN…KDKK), 2054–2083 (EISN…SPNS), and 2367–2386 (NNSS…NNNN). One copy of the LRR 5 repeat lies at 2414-2439 (TTIINNIEMDKNRLDEAIYYLKKYGN).

This is Protein DDB_G0276689 from Dictyostelium discoideum (Social amoeba).